The primary structure comprises 1447 residues: MAHSKTRTNDGKITYPPGVKEISDKISKEEMVRRLKMVVKTFMDMDQDSEEEKELYLNLALHLASDFFLKHPDKDVRLLVACCLADIFRIYAPEAPYTSPDKLKDIFMFITRQLKGLEDTKSPQFNRYFYLLENIAWVKSYNICFELEDSNEIFTQLYRTLFSVINNGHNQKVHMHMVDLMSSIICEGDTVSQELLDTVLVNLVPAHKNLNKQAYDLAKALLKRTAQAIEPYITNFFNQVLMLGKTSISDLSEHVFDLILELYNIDSHLLLSVLPQLEFKLKSNDNEERLQVVKLLAKMFGAKDSELASQNKPLWQCYLGRFNDIHVPIRLECVKFASHCLMNHPDLAKDLTEYLKVRSHDPEEAIRHDVIVSIVTAAKKDILLVNDHLLNFVRERTLDKRWRVRKEAMMGLAQIYKKYALQSAAGKDAAKQICWVKDKLLHIYYQNSIDDRLLVERIFAQYMVPHNLETTERMKCLYYLYATLDLNAVKALNEMWKCQNLLRHQVKDLLDLIKQPKTDASVKAIFSKVMVITRNLPDPGKAQDFMKKFTQVLEDDEKIRKQLEALVSPTCSCKQAEGCVREITKKLGNPKQPTNPFLEMIKFLLERIAPVHIDTESISALIKQVNKSIDGTADDEDEGVPTDQAIRAGLELLKVLSFTHPISFHSAETFESLLACLKMDDEKVAEAALQIFKNTGSKIEEDFPHIRSALLPVLHHKSKKGPPRQAKYAIHCIHAIFSSKETQFAQIFEPLHKSLDPSNLEHLITPLVTIGHIALLAPDQFAAPLKSLVATFIVKDLLMNDRLPGKKTTKLWVPDEEVSPETMVKIQAIKMMVRWLLGMKNNHSKSGTSTLRLLTTILHSDGDLTEQGKISKPDMSRLRLAAGSAIVKLAQEPCYHEIITLEQYQLCALAINDECYQVRQVFAQKLHKGLSRLRLPLEYMAICALCAKDPVKERRAHARQCLVKNITVRREYLKQHAAVSEKLLSLLPEYVVPYTIHLLAHDPDYVKVQDIEQLKDVKECLWFVLEILMAKNENNSHAFIRKMVENIKQTKDAQGPDDTKMNEKLYTVCDVAMNIIMSKSTTYSLESPKDPVLPARFFTQPDKNFSNTKNYLPPEMKSFFTPGKPKTANVLGAVNKPLSSAGKQSQTKSSRMETVSNASSSSNPSSPGRIKGRLDSTEMDHSENEDYTMSSPLPGKKSDKREDSDLVRSELEKPRSRKKASVTDPEEKLGMDDLSKLVQEQKPKGSQRGRKRGHAASESEEQQWPEEKRHKEELLGNEDEQNSPPKKGKRGRPPKPLGGTSKEEPVVKTSKKGNKKKPAPPVVDEDEEEERQMGNTEQKSKSKQQRTSKRAQQRAESPETSAVESTQSTPQKGRGRPSKTPSPSQPKKNIRVGRSKQVATKENDSSEEMDVLQASSPVSDDTTQEGAEEEDISAGNVRRRSSKRERR.

The stretch at 383 to 419 is one HEAT repeat; that stretch reads LLVNDHLLNFVRERTLDKRWRVRKEAMMGLAQIYKKY. N6-acetyllysine is present on lysine 1136. Residues 1137-1155 are compositionally biased toward polar residues; it reads PLSSAGKQSQTKSSRMETV. Residues 1137–1447 form a disordered region; it reads PLSSAGKQSQ…RRRSSKRERR (311 aa). Residues serine 1140, serine 1162, serine 1166, serine 1176, serine 1182, and serine 1191 each carry the phosphoserine modification. A compositionally biased stretch (low complexity) spans 1156-1167; that stretch reads SNASSSSNPSSP. Positions 1172–1184 are enriched in basic and acidic residues; that stretch reads GRLDSTEMDHSEN. Over residues 1196–1214 the composition is skewed to basic and acidic residues; sequence KKSDKREDSDLVRSELEKP. Residue serine 1221 is modified to Phosphoserine. The segment covering 1225–1243 has biased composition (basic and acidic residues); that stretch reads PEEKLGMDDLSKLVQEQKP. Residues 1245–1254 show a composition bias toward basic residues; it reads GSQRGRKRGH. The a.T hook 1 DNA-binding region spans 1247 to 1259; the sequence is QRGRKRGHAASES. A phosphoserine mark is found at serine 1257 and serine 1259. Over residues 1265 to 1274 the composition is skewed to basic and acidic residues; that stretch reads PEEKRHKEEL. Phosphoserine is present on serine 1283. The a.T hook 2 DNA-binding region spans 1287–1299; it reads KGKRGRPPKPLGG. 2 stretches are compositionally biased toward basic residues: residues 1309-1318 and 1341-1352; these read TSKKGNKKKP and KSKQQRTSKRAQ. Phosphoserine occurs at positions 1357 and 1365. Positions 1358-1371 are enriched in polar residues; it reads PETSAVESTQSTPQ. Threonine 1366 carries the post-translational modification Phosphothreonine. Serine 1368 is subject to Phosphoserine. 2 positions are modified to phosphothreonine: threonine 1369 and threonine 1380. The segment at residues 1371 to 1383 is a DNA-binding region (a.T hook 3); that stretch reads QKGRGRPSKTPSP. Residues 1378–1387 are compositionally biased toward low complexity; that stretch reads SKTPSPSQPK. A phosphoserine mark is found at serine 1382, serine 1416, and serine 1419. Residues 1422–1432 show a composition bias toward acidic residues; the sequence is TTQEGAEEEDI. Residues 1437–1447 are compositionally biased toward basic residues; sequence VRRRSSKRERR.

This sequence belongs to the PDS5 family. In terms of assembly, interacts with the cohesin complex. Interacts with RAD21; the interaction is direct. Interacts with WAPL (via FGF motifs) or CDCA5 (via the FGF motif); the interaction is direct, cohesin-dependent and competitive. Highly expressed in intact prostate with levels decreasing after castration. Expressed exclusively in prostate cells inhibited from proliferating by long-term androgen exposure.

The protein localises to the nucleus. Its function is as follows. Regulator of sister chromatid cohesion in mitosis which may stabilize cohesin complex association with chromatin. May couple sister chromatid cohesion during mitosis to DNA replication. Cohesion ensures that chromosome partitioning is accurate in both meiotic and mitotic cells and plays an important role in DNA repair. Plays a role in androgen-induced proliferative arrest in prostate cells. The polypeptide is Sister chromatid cohesion protein PDS5 homolog B (Pds5b) (Rattus norvegicus (Rat)).